A 439-amino-acid polypeptide reads, in one-letter code: tRNA-2-methylthio-N(6)-dimethylallyladenosine synthase (439 aa).

The MTTase N-terminal domain maps to 2-116; the sequence is LKVYIETMGC…ISQVIHKEKA (115 aa). The [4Fe-4S] cluster site is built by Cys11, Cys47, Cys79, Cys149, Cys153, and Cys156. Positions 135 to 368 constitute a Radical SAM core domain; it reads KKAEVRSLLN…QNRHKEILEE (234 aa). The TRAM domain occupies 371–437; sequence RLEVGKTHVV…KGRLMATTKN (67 aa).

It belongs to the methylthiotransferase family. MiaB subfamily. As to quaternary structure, monomer. [4Fe-4S] cluster serves as cofactor.

The protein resides in the cytoplasm. The catalysed reaction is N(6)-dimethylallyladenosine(37) in tRNA + (sulfur carrier)-SH + AH2 + 2 S-adenosyl-L-methionine = 2-methylsulfanyl-N(6)-dimethylallyladenosine(37) in tRNA + (sulfur carrier)-H + 5'-deoxyadenosine + L-methionine + A + S-adenosyl-L-homocysteine + 2 H(+). In terms of biological role, catalyzes the methylthiolation of N6-(dimethylallyl)adenosine (i(6)A), leading to the formation of 2-methylthio-N6-(dimethylallyl)adenosine (ms(2)i(6)A) at position 37 in tRNAs that read codons beginning with uridine. In Helicobacter acinonychis (strain Sheeba), this protein is tRNA-2-methylthio-N(6)-dimethylallyladenosine synthase.